The following is a 360-amino-acid chain: MDKYNIEALIGEGTYGVVSRATVKATGQIVAIKKIRKILIQNQTDDGINFSAIREIKILQELKHDNVVNLLDIFAHKSNVYLVFELMQWDLQEVIEDKSIILKPADIKSYMKMLLQGIEACHRNWVLHRDLKPNNLLMSINGDLKLADFGLARQYGSPNKVFSPQAVTIFYRAPELLFGAKSYGPSVDIWSIGCIFAELMLRTPYLPGTGEIDQLRKICSALGTPNESNWPGVTCLPNYIKFTDHPATPFKQLFTAASDEAIDLISKMLLFNPSNRISAADALNHPYFTSGVKHTNPADLPVPFAKKASLLQQRQVLAQVQQQLLQKQQQQQQQQQQQIQSQPEPIQVDNVEQTQQAQQV.

Positions 4–288 constitute a Protein kinase domain; that stretch reads YNIEALIGEG…AADALNHPYF (285 aa). ATP-binding positions include 10-18 and Lys33; that span reads IGEGTYGVV. Catalysis depends on Asp130, which acts as the Proton acceptor. Phosphoserine occurs at positions 157 and 163. The segment covering 333-342 has biased composition (low complexity); sequence QQQQQQIQSQ. The interval 333–360 is disordered; sequence QQQQQQIQSQPEPIQVDNVEQTQQAQQV. Residues 350–360 are compositionally biased toward polar residues; sequence NVEQTQQAQQV.

The protein belongs to the protein kinase superfamily. CMGC Ser/Thr protein kinase family. CDC2/CDKX subfamily. Probably associates with cyclin H and mat1 to form a multimeric active enzyme.

Its subcellular location is the nucleus. The catalysed reaction is L-seryl-[protein] + ATP = O-phospho-L-seryl-[protein] + ADP + H(+). It carries out the reaction L-threonyl-[protein] + ATP = O-phospho-L-threonyl-[protein] + ADP + H(+). The enzyme catalyses [DNA-directed RNA polymerase] + ATP = phospho-[DNA-directed RNA polymerase] + ADP + H(+). Its function is as follows. Catalytic part of CAK which activates cyclin-associated CDK1/CDK2/CDK4 by threonine phosphorylation, thereby allowing MPF activation. The polypeptide is Cyclin-dependent kinase 7 (cdk7) (Dictyostelium discoideum (Social amoeba)).